Here is a 148-residue protein sequence, read N- to C-terminus: Large-conductance mechanosensitive channel (148 aa).

Helical transmembrane passes span 21-41, 45-65, and 92-112; these read IDLAVGVIIGAAFGKIVDSVV, IMPLVNYILGGSVDFSNKFLV, and GNFLTILINFILLALVVFIIV.

This sequence belongs to the MscL family. Homopentamer.

The protein resides in the cell inner membrane. Its function is as follows. Channel that opens in response to stretch forces in the membrane lipid bilayer. May participate in the regulation of osmotic pressure changes within the cell. This chain is Large-conductance mechanosensitive channel, found in Bordetella petrii (strain ATCC BAA-461 / DSM 12804 / CCUG 43448).